The chain runs to 377 residues: Succinyl-diaminopimelate desuccinylase (377 aa).

Histidine 68 contributes to the Zn(2+) binding site. Aspartate 70 is an active-site residue. Aspartate 101 provides a ligand contact to Zn(2+). The active-site Proton acceptor is glutamate 135. Residues glutamate 136, glutamate 164, and histidine 350 each contribute to the Zn(2+) site.

It belongs to the peptidase M20A family. DapE subfamily. In terms of assembly, homodimer. Zn(2+) is required as a cofactor. The cofactor is Co(2+).

The enzyme catalyses N-succinyl-(2S,6S)-2,6-diaminopimelate + H2O = (2S,6S)-2,6-diaminopimelate + succinate. Its pathway is amino-acid biosynthesis; L-lysine biosynthesis via DAP pathway; LL-2,6-diaminopimelate from (S)-tetrahydrodipicolinate (succinylase route): step 3/3. Its function is as follows. Catalyzes the hydrolysis of N-succinyl-L,L-diaminopimelic acid (SDAP), forming succinate and LL-2,6-diaminopimelate (DAP), an intermediate involved in the bacterial biosynthesis of lysine and meso-diaminopimelic acid, an essential component of bacterial cell walls. This is Succinyl-diaminopimelate desuccinylase from Psychromonas ingrahamii (strain DSM 17664 / CCUG 51855 / 37).